The chain runs to 927 residues: GPI inositol-deacylase (927 aa).

The Cytoplasmic portion of the chain corresponds to 1–4; the sequence is MNPL. A helical transmembrane segment spans residues 5-25; sequence SAVFNSVVLVLLALGVTDVFF. Residues 26-595 are Lumenal-facing; the sequence is SYESSRCSMT…QIVRFHGIYL (570 aa). 2 N-linked (GlcNAc...) asparagine glycosylation sites follow: Asn-75 and Asn-155. The active site involves Ser-169. N-linked (GlcNAc...) asparagine glycans are attached at residues Asn-230, Asn-362, Asn-397, Asn-432, Asn-444, and Asn-482. A helical transmembrane segment spans residues 596–616; that stretch reads PVYIVANLLLAYGAQLHSILI. The Cytoplasmic portion of the chain corresponds to 617–672; sequence QGSCMDLDLSFDVAAKPYKVDPVLIICKYLLNYKWFKNYWDGLMLPQLDAVQLHAY. The chain crosses the membrane as a helical span at residues 673-693; the sequence is GFWFPLASLFFFIFGTSIAYW. Topologically, residues 694–733 are lumenal; the sequence is SSIGLQAAVRILSSLWIYLKRPSMFPKESKCITYRVYAET. A helical membrane pass occupies residues 734 to 754; that stretch reads LFFAFISWRSCGTFSLLLVFL. At 755-821 the chain is on the cytoplasmic side; the sequence is RYLSKVLILY…KALDDCLKMH (67 aa). The chain crosses the membrane as a helical span at residues 822–842; that stretch reads FTILHLNLWIVLLGLPSFIYW. Residues 843-858 lie on the Lumenal side of the membrane; it reads LKTLRYTIQLDPDPNR. The chain crosses the membrane as a helical span at residues 859–879; the sequence is VSALVLIFILEILMNSTTSAI. Over 880-887 the chain is Cytoplasmic; sequence KSSVCLKT. The chain crosses the membrane as a helical span at residues 888-908; it reads AAVLQLPLSIIVVAFGTLHLY. Over 909 to 927 the chain is Lumenal; that stretch reads RISNLIAFSLFLHVVCCFV.

The protein belongs to the GPI inositol-deacylase family.

Its subcellular location is the endoplasmic reticulum membrane. In terms of biological role, GPI inositol-deacylase that catalyzes the remove of the acyl chain linked to the 2-OH position of inositol ring from the GPI-anchored protein (GPI-AP) in the endoplasmic reticulum. Initiates the post-attachment remodeling phase of GPI-AP biogenesis and participates in endoplasmic reticulum (ER)-to-Golgi transport of GPI-anchored protein. In Xenopus laevis (African clawed frog), this protein is GPI inositol-deacylase.